The following is a 313-amino-acid chain: DNA-directed RNA polymerase subunit alpha (313 aa).

The segment at 1-226 is alpha N-terminal domain (alpha-NTD); the sequence is MLEIEKPKIE…EHMRLFLGLT (226 aa). The alpha C-terminal domain (alpha-CTD) stretch occupies residues 242 to 313; that stretch reads TRDRLMDMSI…LGLSLRSSEE (72 aa).

The protein belongs to the RNA polymerase alpha chain family. As to quaternary structure, homodimer. The RNAP catalytic core consists of 2 alpha, 1 beta, 1 beta' and 1 omega subunit. When a sigma factor is associated with the core the holoenzyme is formed, which can initiate transcription.

It catalyses the reaction RNA(n) + a ribonucleoside 5'-triphosphate = RNA(n+1) + diphosphate. DNA-dependent RNA polymerase catalyzes the transcription of DNA into RNA using the four ribonucleoside triphosphates as substrates. This chain is DNA-directed RNA polymerase subunit alpha, found in Moorella thermoacetica (strain ATCC 39073 / JCM 9320).